A 257-amino-acid chain; its full sequence is UPF0246 protein Shew185_1115 (257 aa).

Belongs to the UPF0246 family.

In Shewanella baltica (strain OS185), this protein is UPF0246 protein Shew185_1115.